The chain runs to 356 residues: Peptide chain release factor 1 (356 aa).

Position 230 is an N5-methylglutamine (Q230). Basic and acidic residues predominate over residues A279–K289. Residues A279–E299 form a disordered region.

It belongs to the prokaryotic/mitochondrial release factor family. Post-translationally, methylated by PrmC. Methylation increases the termination efficiency of RF1.

Its subcellular location is the cytoplasm. Functionally, peptide chain release factor 1 directs the termination of translation in response to the peptide chain termination codons UAG and UAA. This Caulobacter vibrioides (strain ATCC 19089 / CIP 103742 / CB 15) (Caulobacter crescentus) protein is Peptide chain release factor 1 (prfA).